A 205-amino-acid chain; its full sequence is uncharacterized protein (205 aa).

The 104-residue stretch at 26–129 folds into the HD domain; the sequence is DWHHVSRVAD…VQDADRLDAI (104 aa).

This is an uncharacterized protein from Bacillus subtilis (strain 168).